Here is a 136-residue protein sequence, read N- to C-terminus: General odorant-binding protein 57d (136 aa).

Residues 1–29 (MPEKMSLRLVPHLACIIFILEIQFRIADS) form the signal peptide. Cystine bridges form between cysteine 33–cysteine 70, cysteine 66–cysteine 118, and cysteine 107–cysteine 127.

It belongs to the PBP/GOBP family.

Its function is as follows. Present in the aqueous fluid surrounding olfactory sensory dendrites and are thought to aid in the capture and transport of hydrophobic odorants into and through this fluid. The sequence is that of General odorant-binding protein 57d from Drosophila melanogaster (Fruit fly).